Here is a 262-residue protein sequence, read N- to C-terminus: MRREKGFQVPTDGTVIYVPPGIQETRLATRSLAWVDCCRVALHTYGAVGWQLAGLTALLSAFCYAAPATWFHHSRLCLTESSPSLVFVIPVTSVIFIHCYETSHPSNIGVLLFYTLLHVPPLIVICLCLDGTLVISAALFTLLAFLSCTGVALLAPERTVRRQIVVIHALITLTFTAIVVVILRRGWSWCFKIVLSFSVLITCLAVSHFHEAALAVRYETPLERALLAAVKVFLSLVFTLLMVLRIMTLRTFLQTYFSSDKL.

7 helical membrane-spanning segments follow: residues 46–66 (GAVG…CYAA), 77–97 (CLTE…VIFI), 108–128 (IGVL…ICLC), 133–153 (LVIS…GVAL), 163–183 (QIVV…VVIL), 186–206 (GWSW…CLAV), and 226–246 (LLAA…VLRI).

This sequence belongs to the HHV-5 US12 protein family.

The protein localises to the host membrane. The chain is Membrane protein US15 (US15) from Human cytomegalovirus (strain Merlin) (HHV-5).